Here is a 201-residue protein sequence, read N- to C-terminus: E3 ubiquitin-protein ligase LAP (201 aa).

At 1–92 the chain is on the cytoplasmic side; that stretch reads MSTIVDMVDV…RDCHDSLLVN (92 aa). Residues 9-69 form an RING-CH-type zinc finger; that stretch reads DVSLVDKCCW…AICETPYNVK (61 aa). The Zn(2+) site is built by Cys-17, Cys-20, Cys-31, Cys-33, His-41, Cys-44, Cys-59, and Cys-62. Residues 93–113 form a helical membrane-spanning segment; sequence LPLCLIVGGISTYTLVSVEII. Topologically, residues 114–123 are lumenal; it reads KLMESEETSE. Residues 124 to 144 form a helical membrane-spanning segment; sequence LTKVFLVTSFLGPFIVTVLSA. The Cytoplasmic portion of the chain corresponds to 145-201; the sequence is LRTCIDCRTYFLTTRKRNTIHTLQELEDDDDDDDDDDDDDDEEYADAVEEIIIGPSN. Residues 168 to 188 are disordered; it reads QELEDDDDDDDDDDDDDDEEY. Over residues 169–188 the composition is skewed to acidic residues; sequence ELEDDDDDDDDDDDDDDEEY.

The protein belongs to the poxviridae LAP protein family.

The protein localises to the host membrane. Its subcellular location is the host Golgi apparatus. It localises to the host trans-Golgi network membrane. It is found in the host early endosome membrane. It catalyses the reaction S-ubiquitinyl-[E2 ubiquitin-conjugating enzyme]-L-cysteine + [acceptor protein]-L-lysine = [E2 ubiquitin-conjugating enzyme]-L-cysteine + N(6)-ubiquitinyl-[acceptor protein]-L-lysine.. Functionally, E3 ubiquitin-protein ligase which promotes ubiquitination and subsequent degradation of host MHC-I and CD4 molecules, presumably to prevent lysis of infected cells by cytotoxic T-lymphocytes and NK cell. Binds target molecules through transmembrane interaction. The result of this ubiquitination is the enhancement of the endocytosis of the target chain and the delivery to the lysosome, where it is proteolytically destroyed. The protein is E3 ubiquitin-protein ligase LAP of Oryctolagus cuniculus (Rabbit).